Here is a 227-residue protein sequence, read N- to C-terminus: Translation initiation factor 6 (227 aa).

The protein belongs to the eIF-6 family.

Binds to the 50S ribosomal subunit and prevents its association with the 30S ribosomal subunit to form the 70S initiation complex. This is Translation initiation factor 6 from Methanococcus maripaludis (strain DSM 14266 / JCM 13030 / NBRC 101832 / S2 / LL).